The primary structure comprises 603 residues: Pentatricopeptide repeat-containing protein At2g02980, chloroplastic (603 aa).

The transit peptide at 1 to 38 directs the protein to the chloroplast; that stretch reads MAISSASLISSFSHAETFTKHSKIDTVNTQNPILLISK. 10 PPR repeats span residues 93-127, 128-162, 163-193, 194-228, 229-263, 264-294, 295-329, 330-365, 366-400, and 432-466; these read DIVI…GILP, DNYT…GLDD, NVYV…IVEP, CVVC…YLKP, NEIT…SFCK, YVKV…MRYK, DTQA…NVQP, DEIT…GIVP, SIKH…PTPM, and HGGD…KAVK. The segment at 401–476 is type E motif; that stretch reads LWRILLAACS…VPGCSSIEVN (76 aa). The segment at 477–507 is type E(+) motif; sequence NVVHEFFSGDGVKSATTKLHRALDEMVKELK. Residues 508–603 are type DYW motif; that stretch reads LSGYVPDTSM…DGKCSCGDFW (96 aa).

It belongs to the PPR family. PCMP-H subfamily.

It is found in the plastid. The protein localises to the chloroplast. Functionally, involved in RNA editing event in chloroplasts. Required for the editing of a single site in ndhD transcript, which is a plastid-encoded subunits of the chloroplast NAD(P)H dehydrogenase (NDH) complex. Not essential for the activity of the NDH complex of the photosynthetic electron transport chain. The sequence is that of Pentatricopeptide repeat-containing protein At2g02980, chloroplastic (PCMP-H26) from Arabidopsis thaliana (Mouse-ear cress).